The following is a 144-amino-acid chain: Transcriptional regulator SlyA (144 aa).

Residues 2–135 (ESPLGSDLAR…LNKIISKLEK (134 aa)) form the HTH marR-type domain. The H-T-H motif DNA-binding region spans 49–72 (QIQLAKAIGIEQPSLVRTLDQLEE).

The protein belongs to the SlyA family. In terms of assembly, homodimer.

In terms of biological role, transcription regulator that can specifically activate or repress expression of target genes. This Blochmanniella pennsylvanica (strain BPEN) protein is Transcriptional regulator SlyA.